A 310-amino-acid polypeptide reads, in one-letter code: Zinc finger protein 42 homolog (310 aa).

Basic residues predominate over residues methionine 1–lysine 15. A disordered region spans residues methionine 1–aspartate 35. C2H2-type zinc fingers lie at residues isoleucine 188 to histidine 212, histidine 217 to histidine 239, phenylalanine 245 to histidine 269, and phenylalanine 275 to histidine 299. Glycyl lysine isopeptide (Lys-Gly) (interchain with G-Cter in ubiquitin) cross-links involve residues lysine 231 and lysine 233.

This sequence belongs to the krueppel C2H2-type zinc-finger protein family. In terms of processing, polyubiquitinated by RNF12, leading to proteasomal degradation. Expressed in kidney, epidermal keratinocytes, prostate epithelial cells, bronchial and small airway lung epithelial cells (at protein level). Expressed in malignant kidney and several carcinoma cell lines (at protein level). Expressed in embryonic stem cells, kidney, epidermal keratinocytes, prostate epithelial cells, bronchial and small airway lung epithelial cells. Expressed in embryonal carcinomas, seminomas, malignant kidney and several carcinoma cell lines.

It is found in the nucleus. Its function is as follows. Involved in the reprogramming of X-chromosome inactivation during the acquisition of pluripotency. Required for efficient elongation of TSIX, a non-coding RNA antisense to XIST. Binds DXPas34 enhancer within the TSIX promoter. Involved in ES cell self-renewal. This Homo sapiens (Human) protein is Zinc finger protein 42 homolog (ZFP42).